Here is a 252-residue protein sequence, read N- to C-terminus: 3-dehydroquinate dehydratase (252 aa).

3-dehydroquinate-binding positions include Ser21, 46–48, and Arg82; that span reads EWR. The active-site Proton donor/acceptor is His143. The Schiff-base intermediate with substrate role is filled by Lys170. Residues Arg213, Ser232, and Gln236 each coordinate 3-dehydroquinate.

This sequence belongs to the type-I 3-dehydroquinase family. Homodimer.

The enzyme catalyses 3-dehydroquinate = 3-dehydroshikimate + H2O. Its pathway is metabolic intermediate biosynthesis; chorismate biosynthesis; chorismate from D-erythrose 4-phosphate and phosphoenolpyruvate: step 3/7. Its function is as follows. Involved in the third step of the chorismate pathway, which leads to the biosynthesis of aromatic amino acids. Catalyzes the cis-dehydration of 3-dehydroquinate (DHQ) and introduces the first double bond of the aromatic ring to yield 3-dehydroshikimate. This Escherichia coli (strain K12 / MC4100 / BW2952) protein is 3-dehydroquinate dehydratase.